The sequence spans 201 residues: Large ribosomal subunit protein uL4 (201 aa).

The segment at 43 to 71 is disordered; sequence TRAQKTRSDVSGGGKKPWRQKGTGRARSG.

The protein belongs to the universal ribosomal protein uL4 family. As to quaternary structure, part of the 50S ribosomal subunit.

One of the primary rRNA binding proteins, this protein initially binds near the 5'-end of the 23S rRNA. It is important during the early stages of 50S assembly. It makes multiple contacts with different domains of the 23S rRNA in the assembled 50S subunit and ribosome. Its function is as follows. Forms part of the polypeptide exit tunnel. The polypeptide is Large ribosomal subunit protein uL4 (Psychromonas ingrahamii (strain DSM 17664 / CCUG 51855 / 37)).